The sequence spans 502 residues: CDP-diacylglycerol--glycerol-3-phosphate 3-phosphatidyltransferase (502 aa).

58–65 (STLYIGKE) is a binding site for ATP. 2 PLD phosphodiesterase domains span residues 143-169 (GWGLQHMKIYGADDNLIISGANLSRDY) and 410-443 (KGNTYHAKGFWLSTQHHKHPFLTTIGSSNYTSRS). Active-site residues include His-148, Lys-150, and Asp-155.

Belongs to the CDP-alcohol phosphatidyltransferase class-II family.

The protein resides in the mitochondrion. It catalyses the reaction a CDP-1,2-diacyl-sn-glycerol + sn-glycerol 3-phosphate = a 1,2-diacyl-sn-glycero-3-phospho-(1'-sn-glycero-3'-phosphate) + CMP + H(+). The protein operates within phospholipid metabolism; phosphatidylglycerol biosynthesis; phosphatidylglycerol from CDP-diacylglycerol: step 1/2. In terms of biological role, functions in the biosynthesis of the anionic phospholipids phosphatidylglycerol and cardiolipin. The polypeptide is CDP-diacylglycerol--glycerol-3-phosphate 3-phosphatidyltransferase (pgs1) (Schizosaccharomyces pombe (strain 972 / ATCC 24843) (Fission yeast)).